A 356-amino-acid polypeptide reads, in one-letter code: Histidinol-phosphate aminotransferase (356 aa).

Lys214 is modified (N6-(pyridoxal phosphate)lysine).

It belongs to the class-II pyridoxal-phosphate-dependent aminotransferase family. Histidinol-phosphate aminotransferase subfamily. As to quaternary structure, homodimer. Requires pyridoxal 5'-phosphate as cofactor.

It carries out the reaction L-histidinol phosphate + 2-oxoglutarate = 3-(imidazol-4-yl)-2-oxopropyl phosphate + L-glutamate. Its pathway is amino-acid biosynthesis; L-histidine biosynthesis; L-histidine from 5-phospho-alpha-D-ribose 1-diphosphate: step 7/9. In Escherichia coli O81 (strain ED1a), this protein is Histidinol-phosphate aminotransferase.